Here is a 284-residue protein sequence, read N- to C-terminus: Lipoyl synthase (284 aa).

Positions 36, 41, 47, 62, 66, 69, and 273 each coordinate [4Fe-4S] cluster. One can recognise a Radical SAM core domain in the interval 48–262 (WGKGTATFMI…RTIGLKKGFR (215 aa)).

The protein belongs to the radical SAM superfamily. Lipoyl synthase family. [4Fe-4S] cluster serves as cofactor.

It localises to the cytoplasm. It carries out the reaction [[Fe-S] cluster scaffold protein carrying a second [4Fe-4S](2+) cluster] + N(6)-octanoyl-L-lysyl-[protein] + 2 oxidized [2Fe-2S]-[ferredoxin] + 2 S-adenosyl-L-methionine + 4 H(+) = [[Fe-S] cluster scaffold protein] + N(6)-[(R)-dihydrolipoyl]-L-lysyl-[protein] + 4 Fe(3+) + 2 hydrogen sulfide + 2 5'-deoxyadenosine + 2 L-methionine + 2 reduced [2Fe-2S]-[ferredoxin]. The protein operates within protein modification; protein lipoylation via endogenous pathway; protein N(6)-(lipoyl)lysine from octanoyl-[acyl-carrier-protein]: step 2/2. In terms of biological role, catalyzes the radical-mediated insertion of two sulfur atoms into the C-6 and C-8 positions of the octanoyl moiety bound to the lipoyl domains of lipoate-dependent enzymes, thereby converting the octanoylated domains into lipoylated derivatives. In Phocaeicola vulgatus (strain ATCC 8482 / DSM 1447 / JCM 5826 / CCUG 4940 / NBRC 14291 / NCTC 11154) (Bacteroides vulgatus), this protein is Lipoyl synthase.